We begin with the raw amino-acid sequence, 302 residues long: Heat stress transcription factor B-1 (302 aa).

Over residues 1 to 15 the composition is skewed to low complexity; that stretch reads MAAAEAAAAVGKQQQ. Disordered stretches follow at residues 1–33 and 116–184; these read MAAAEAAAAVGKQQQKGGGGRGGGGGGPAPFLT and GIRR…RKDN. Positions 16–28 are enriched in gly residues; the sequence is KGGGGRGGGGGGP. Polar residues predominate over residues 123-133; that stretch reads TTPQSSKSCGS. Residues 139–150 show a composition bias toward pro residues; it reads FPPPLPPLPPEP. The segment covering 151-172 has biased composition (low complexity); the sequence is SATTSSGNDRSSSSASSPPRAD. A coiled-coil region spans residues 170–202; it reads RADITSENEQLRKDNQTLTMELARARRHCEELL. The tract at residues 180-209 is hydrophobic repeat HR-A/B; it reads LRKDNQTLTMELARARRHCEELLGFLSRFL. The Nuclear export signal signature appears at 211 to 218; sequence VRQLDLRL. Residues 263-267 carry the Nuclear localization signal motif; that stretch reads RKRAR.

The protein belongs to the HSF family. Class B subfamily. Homotrimer. In terms of processing, exhibits temperature-dependent phosphorylation.

The protein localises to the cytoplasm. The protein resides in the nucleus. Its function is as follows. Transcriptional regulator that specifically binds DNA of heat shock promoter elements (HSE). The chain is Heat stress transcription factor B-1 (HSFB1) from Oryza sativa subsp. japonica (Rice).